The chain runs to 198 residues: Prolactin (198 aa).

3 disulfide bridges follow: cysteine 4-cysteine 11, cysteine 58-cysteine 173, and cysteine 190-cysteine 198.

It belongs to the somatotropin/prolactin family. In terms of tissue distribution, pituitary gland.

It localises to the secreted. This Chelonia mydas (Green sea-turtle) protein is Prolactin.